We begin with the raw amino-acid sequence, 284 residues long: Tropomyosin alpha-1 chain (284 aa).

The interval 1–37 is disordered; the sequence is MDAIKKKMQMLKLDKENALDRAEQAETDKKAAEERSK. Positions 1-284 form a coiled coil; sequence MDAIKKKMQM…DHALNDMTSI (284 aa). Over residues 12 to 37 the composition is skewed to basic and acidic residues; the sequence is KLDKENALDRAEQAETDKKAAEERSK.

Belongs to the tropomyosin family. Homodimer. Heterodimer of an alpha (TPM1, TPM3 or TPM4) and a beta (TPM2) chain.

It localises to the cytoplasm. It is found in the cytoskeleton. Its function is as follows. Binds to actin filaments in muscle and non-muscle cells. Plays a central role, in association with the troponin complex, in the calcium dependent regulation of vertebrate striated muscle contraction. Smooth muscle contraction is regulated by interaction with caldesmon. In non-muscle cells is implicated in stabilizing cytoskeleton actin filaments. The sequence is that of Tropomyosin alpha-1 chain (tpma) from Danio rerio (Zebrafish).